We begin with the raw amino-acid sequence, 340 residues long: Ferrochelatase (340 aa).

His189 and Glu292 together coordinate Fe cation.

Belongs to the ferrochelatase family.

The protein localises to the cytoplasm. The catalysed reaction is heme b + 2 H(+) = protoporphyrin IX + Fe(2+). Its pathway is porphyrin-containing compound metabolism; protoheme biosynthesis; protoheme from protoporphyrin-IX: step 1/1. Functionally, catalyzes the ferrous insertion into protoporphyrin IX. This is Ferrochelatase from Ectopseudomonas mendocina (strain ymp) (Pseudomonas mendocina).